The sequence spans 390 residues: MAVKVLVVDDSGFFRRRVTEILSSDPNIVVVGTATNGKEAIEQALALKPDVITMDYEMPMMDGITAVRHIMQRIPTPVLMFSSLTHEGARVTLDALDAGAVDFLPKNFEDISRNPQKVKQLLCEKINSISRSNRRSSGIGSASAASPAPAAPAPSTLSSRAPAPSAAAPARAVPSRTVAPAAAPAAHAHHTPAHPTTTGTAKRKAYKLVAIGTSTGGPVALQRVLTQLPANFPAPLVLIQHMPAAFTKAFAERLDKLCKISVKEAEDGDVLRPGLALLAPGGKQMMVDSRGTVKILPGDERLNYKPCVDITFGSAAKSYGDKVLSVVLTGMGADGREGARLLKQVGSTVWAQDEASCVIYGMPMAIVKAELADAIYSLDDIGRHLVEACL.

The Response regulatory domain maps to 4-121 (KVLVVDDSGF…SRNPQKVKQL (118 aa)). At D55 the chain carries 4-aspartylphosphate. Residues 132-186 (SNRRSSGIGSASAASPAPAAPAPSTLSSRAPAPSAAAPARAVPSRTVAPAAAPAA) are compositionally biased toward low complexity. The disordered stretch occupies residues 132-201 (SNRRSSGIGS…PAHPTTTGTA (70 aa)). Residues 195–387 (PTTTGTAKRK…LDDIGRHLVE (193 aa)) form the CheB-type methylesterase domain. Active-site residues include S214, H241, and D334.

It belongs to the CheB family. Phosphorylated by CheA. Phosphorylation of the N-terminal regulatory domain activates the methylesterase activity.

Its subcellular location is the cytoplasm. The enzyme catalyses [protein]-L-glutamate 5-O-methyl ester + H2O = L-glutamyl-[protein] + methanol + H(+). It carries out the reaction L-glutaminyl-[protein] + H2O = L-glutamyl-[protein] + NH4(+). Involved in chemotaxis. Part of a chemotaxis signal transduction system that modulates chemotaxis in response to various stimuli. Catalyzes the demethylation of specific methylglutamate residues introduced into the chemoreceptors (methyl-accepting chemotaxis proteins or MCP) by CheR. Also mediates the irreversible deamidation of specific glutamine residues to glutamic acid. The polypeptide is Protein-glutamate methylesterase/protein-glutamine glutaminase 1 (Pseudomonas syringae pv. tomato (strain ATCC BAA-871 / DC3000)).